Consider the following 218-residue polypeptide: MPKSCAARQCCNRYSSRRKQLTFHRFPFSRPELLREWVLNIGRADFKPKQHTVICSEHFRPECFSAFGNRKNLKHNAVPTVFAFQNPTEVCPEVGAGGDSSGRNMDTTLEELQPPTPEGPVQQVLPDREAMEATEAAGLPASPLGLKRPLPGQPSDHSYALSDLDTLKKKLFLTLKENKRLRKRLKAQRLLLRRTCGRLRAYREGQPGPRARRPAQGS.

A THAP-type zinc finger spans residues 1–82; the sequence is MPKSCAARQC…LKHNAVPTVF (82 aa). Disordered regions lie at residues 97–120 and 133–154; these read GGDS…PEGP and ATEA…PGQP. Ser100 carries the post-translational modification Phosphoserine. The HCFC1-binding motif (HBM) signature appears at 156-159; sequence DHSY.

In terms of assembly, component of a THAP1/THAP3-HCFC1-OGT complex that contains at least, either THAP1 or THAP3, HCFC1 and OGT. Interacts directly with OGT and HCFC1 (via its HBM). Highest levels in heart, liver and kidney. Lower levels in brain and lung.

In terms of biological role, component of a THAP1/THAP3-HCFC1-OGT complex that is required for the regulation of the transcriptional activity of RRM1. This Mus musculus (Mouse) protein is THAP domain-containing protein 3 (Thap3).